The following is a 558-amino-acid chain: Dihydroxy-acid dehydratase (558 aa).

Aspartate 78 contributes to the Mg(2+) binding site. Cysteine 119 serves as a coordination point for [2Fe-2S] cluster. Residues aspartate 120 and lysine 121 each coordinate Mg(2+). Position 121 is an N6-carboxylysine (lysine 121). Residue cysteine 192 coordinates [2Fe-2S] cluster. Position 446 (glutamate 446) interacts with Mg(2+). The active-site Proton acceptor is the serine 472.

The protein belongs to the IlvD/Edd family. As to quaternary structure, homodimer. The cofactor is [2Fe-2S] cluster. Mg(2+) serves as cofactor.

It catalyses the reaction (2R)-2,3-dihydroxy-3-methylbutanoate = 3-methyl-2-oxobutanoate + H2O. It carries out the reaction (2R,3R)-2,3-dihydroxy-3-methylpentanoate = (S)-3-methyl-2-oxopentanoate + H2O. The protein operates within amino-acid biosynthesis; L-isoleucine biosynthesis; L-isoleucine from 2-oxobutanoate: step 3/4. It participates in amino-acid biosynthesis; L-valine biosynthesis; L-valine from pyruvate: step 3/4. Its function is as follows. Functions in the biosynthesis of branched-chain amino acids. Catalyzes the dehydration of (2R,3R)-2,3-dihydroxy-3-methylpentanoate (2,3-dihydroxy-3-methylvalerate) into 2-oxo-3-methylpentanoate (2-oxo-3-methylvalerate) and of (2R)-2,3-dihydroxy-3-methylbutanoate (2,3-dihydroxyisovalerate) into 2-oxo-3-methylbutanoate (2-oxoisovalerate), the penultimate precursor to L-isoleucine and L-valine, respectively. This is Dihydroxy-acid dehydratase from Campylobacter lari (strain RM2100 / D67 / ATCC BAA-1060).